Reading from the N-terminus, the 109-residue chain is Large ribosomal subunit protein P1 (109 aa).

The tract at residues 90-109 (AAAKKEEEEEDDDMGFGLFD) is disordered.

This sequence belongs to the eukaryotic ribosomal protein P1/P2 family. As to quaternary structure, P1 and P2 exist as dimers at the large ribosomal subunit.

In terms of biological role, plays an important role in the elongation step of protein synthesis. The polypeptide is Large ribosomal subunit protein P1 (Trypanosoma cruzi).